Reading from the N-terminus, the 510-residue chain is NAD(P)H-quinone oxidoreductase subunit 2 B, chloroplastic (510 aa).

Helical transmembrane passes span 26-46 (LFDG…ILLL), 57-77 (IPWF…ALLF), 99-119 (IFQF…VEYI), 124-144 (MAIT…MFLC), 149-169 (LITI…LSGY), 183-203 (YLLM…WLYG), 227-247 (PGIS…LSPA), 295-315 (WHPL…LIAI), 323-342 (MLAY…IIVG), 354-374 (YMLF…LFGL), 395-415 (ALSL…AGFF), 418-438 (LHLF…IGLF), and 484-504 (MIVC…IIAI).

Belongs to the complex I subunit 2 family. As to quaternary structure, NDH is composed of at least 16 different subunits, 5 of which are encoded in the nucleus.

Its subcellular location is the plastid. It is found in the chloroplast thylakoid membrane. It carries out the reaction a plastoquinone + NADH + (n+1) H(+)(in) = a plastoquinol + NAD(+) + n H(+)(out). The catalysed reaction is a plastoquinone + NADPH + (n+1) H(+)(in) = a plastoquinol + NADP(+) + n H(+)(out). In terms of biological role, NDH shuttles electrons from NAD(P)H:plastoquinone, via FMN and iron-sulfur (Fe-S) centers, to quinones in the photosynthetic chain and possibly in a chloroplast respiratory chain. The immediate electron acceptor for the enzyme in this species is believed to be plastoquinone. Couples the redox reaction to proton translocation, and thus conserves the redox energy in a proton gradient. This Oenothera argillicola (Appalachian evening primrose) protein is NAD(P)H-quinone oxidoreductase subunit 2 B, chloroplastic.